The primary structure comprises 147 residues: Deoxyuridine 5'-triphosphate nucleotidohydrolase (147 aa).

Substrate-binding positions include 63–65, N76, and 80–82; these read RSG and TID.

This sequence belongs to the dUTPase family. Mg(2+) is required as a cofactor.

The enzyme catalyses dUTP + H2O = dUMP + diphosphate + H(+). Its pathway is pyrimidine metabolism; dUMP biosynthesis; dUMP from dCTP (dUTP route): step 2/2. Its function is as follows. This enzyme is involved in nucleotide metabolism: it produces dUMP, the immediate precursor of thymidine nucleotides and it decreases the intracellular concentration of dUTP so that uracil cannot be incorporated into DNA. This Chlamydia felis (strain Fe/C-56) (Chlamydophila felis) protein is Deoxyuridine 5'-triphosphate nucleotidohydrolase.